A 94-amino-acid chain; its full sequence is Co-chaperonin GroES (94 aa).

It belongs to the GroES chaperonin family. As to quaternary structure, heptamer of 7 subunits arranged in a ring. Interacts with the chaperonin GroEL.

It is found in the cytoplasm. Functionally, together with the chaperonin GroEL, plays an essential role in assisting protein folding. The GroEL-GroES system forms a nano-cage that allows encapsulation of the non-native substrate proteins and provides a physical environment optimized to promote and accelerate protein folding. GroES binds to the apical surface of the GroEL ring, thereby capping the opening of the GroEL channel. This is Co-chaperonin GroES from Staphylococcus epidermidis (strain ATCC 35984 / DSM 28319 / BCRC 17069 / CCUG 31568 / BM 3577 / RP62A).